Consider the following 214-residue polypeptide: MSGMPNAELVREQQQPGDPMGSSAHPNAYVPEVGGLGSELPEAPRDKFFRKMREQPLVPIGSLLTCGALIAASNHLRSGNRDQFNKALRWRVGFQGLTVLAALVGSFYYGQQAAATIPAPASSSADAPLQQGAVTTLPGRAPTVWQQTRADERANKGRNEFEGRVGQALDRELNDDKRLEEALLGKEEEINLEQLKKTATKPRPVIGQDARRQV.

The tract at residues methionine 1–leucine 36 is disordered. One can recognise an HIG1 domain in the interval tyrosine 29–proline 120. Transmembrane regions (helical) follow at residues leucine 57–serine 73 and leucine 88–tyrosine 109. Positions lysine 177–lysine 197 form a coiled coil. The tract at residues leucine 195–valine 214 is disordered.

Belongs to the RCF1 family. Associates with the respiratory chain complex III/complex IV supercomplex.

It localises to the mitochondrion membrane. In terms of biological role, cytochrome c oxidase subunit which plays a role in assembly of respiratory supercomplexes. This is Respiratory supercomplex factor 1, mitochondrial (RCF1) from Mycosarcoma maydis (Corn smut fungus).